A 147-amino-acid chain; its full sequence is Hemoglobin subunit gamma-1 (147 aa).

The residue at position 2 (glycine 2) is an N-acetylglycine; in form Hb F1. In terms of domain architecture, Globin spans 3 to 147 (HFTEEDKATI…VASALSSRYH (145 aa)). A Phosphothreonine modification is found at threonine 13. Serine 45, serine 51, and serine 53 each carry phosphoserine. The residue at position 60 (lysine 60) is an N6-acetyllysine. Histidine 64 is a binding site for heme b. Lysine 83 is subject to N6-acetyllysine. A heme b-binding site is contributed by histidine 93. At cysteine 94 the chain carries S-nitrosocysteine. Position 140 is a phosphoserine (serine 140).

This sequence belongs to the globin family. Heterotetramer of two alpha chains and two gamma chains in fetal hemoglobin (Hb F). In the case of deletions affecting one or more of the alpha chains, the excess gamma chains form homotetramers that exhibit neither Bohr effect nor heme-heme cooperativity (hemoglobin Bart's). Post-translationally, acetylation of Gly-2 converts Hb F to the minor Hb F1. Red blood cells.

Gamma chains make up the fetal hemoglobin F, in combination with alpha chains. The sequence is that of Hemoglobin subunit gamma-1 (HBG1) from Homo sapiens (Human).